A 485-amino-acid chain; its full sequence is Glutamyl-tRNA(Gln) amidotransferase subunit A (485 aa).

Catalysis depends on charge relay system residues lysine 74 and serine 149. Residue serine 173 is the Acyl-ester intermediate of the active site.

It belongs to the amidase family. GatA subfamily. As to quaternary structure, heterotrimer of A, B and C subunits.

The catalysed reaction is L-glutamyl-tRNA(Gln) + L-glutamine + ATP + H2O = L-glutaminyl-tRNA(Gln) + L-glutamate + ADP + phosphate + H(+). Functionally, allows the formation of correctly charged Gln-tRNA(Gln) through the transamidation of misacylated Glu-tRNA(Gln) in organisms which lack glutaminyl-tRNA synthetase. The reaction takes place in the presence of glutamine and ATP through an activated gamma-phospho-Glu-tRNA(Gln). The chain is Glutamyl-tRNA(Gln) amidotransferase subunit A from Herminiimonas arsenicoxydans.